The chain runs to 240 residues: Uridylate kinase (240 aa).

Position 14–17 (14–17) interacts with ATP; it reads KLSG. Gly-56 contributes to the UMP binding site. Positions 57 and 61 each coordinate ATP. Residues Asp-76 and 137 to 144 each bind UMP; that span reads TGNPFFTT. ATP contacts are provided by Thr-164, Tyr-170, and Asp-173.

The protein belongs to the UMP kinase family. As to quaternary structure, homohexamer.

It is found in the cytoplasm. It catalyses the reaction UMP + ATP = UDP + ADP. Its pathway is pyrimidine metabolism; CTP biosynthesis via de novo pathway; UDP from UMP (UMPK route): step 1/1. With respect to regulation, inhibited by UTP. Catalyzes the reversible phosphorylation of UMP to UDP. This chain is Uridylate kinase, found in Acidovorax sp. (strain JS42).